The following is a 212-amino-acid chain: NAD(P)H dehydrogenase (quinone) 3 (212 aa).

In terms of domain architecture, Flavodoxin-like spans 4–192 (MLVLYYSSYG…DGARFQGRHV (189 aa)). FMN contacts are provided by residues 10–15 (SSYGHI) and 78–80 (TRF). Tyr12 is a binding site for NAD(+). Trp98 contacts substrate. FMN-binding positions include 113-119 (STGSQHG) and His134. The tract at residues 161–182 (YGASTLAEDENHRDRSPSANEL) is disordered.

The protein belongs to the WrbA family. The cofactor is FMN.

The catalysed reaction is a quinone + NADH + H(+) = a quinol + NAD(+). It catalyses the reaction a quinone + NADPH + H(+) = a quinol + NADP(+). In Rhizobium meliloti (strain 1021) (Ensifer meliloti), this protein is NAD(P)H dehydrogenase (quinone) 3.